Reading from the N-terminus, the 541-residue chain is Formimidoyltransferase-cyclodeaminase (541 aa).

Residues methionine 1–phenylalanine 181 form a formiminotransferase N-subdomain region. Histidine 82 acts as the For formimidoyltransferase activity in catalysis. Glycine 163–glycine 172 contributes to the folate binding site. The interval leucine 182–valine 326 is formiminotransferase C-subdomain. A linker region spans residues proline 327 to serine 334. Positions leucine 335–alanine 541 are cyclodeaminase/cyclohydrolase. Aspartate 412 acts as the For cyclodeaminase activity in catalysis. A Phosphoserine modification is found at serine 520.

The protein in the C-terminal section; belongs to the cyclodeaminase/cyclohydrolase family. This sequence in the N-terminal section; belongs to the formiminotransferase family. Homooctamer, including four polyglutamate binding sites. The subunits are arranged as a tetramer of dimers, and form a planar ring-shaped structure.

Its subcellular location is the cytoplasm. The protein localises to the cytosol. It is found in the golgi apparatus. It localises to the cytoskeleton. The protein resides in the microtubule organizing center. Its subcellular location is the centrosome. The protein localises to the centriole. The enzyme catalyses 5-formimidoyltetrahydrofolate + L-glutamate = N-formimidoyl-L-glutamate + (6S)-5,6,7,8-tetrahydrofolate. It catalyses the reaction 5-formimidoyltetrahydrofolate + 2 H(+) = (6R)-5,10-methenyltetrahydrofolate + NH4(+). Its pathway is amino-acid degradation; L-histidine degradation into L-glutamate; L-glutamate from N-formimidoyl-L-glutamate (transferase route): step 1/1. Functionally, folate-dependent enzyme, that displays both transferase and deaminase activity. Serves to channel one-carbon units from formiminoglutamate to the folate pool. Binds and promotes bundling of vimentin filaments originating from the Golgi. This Sus scrofa (Pig) protein is Formimidoyltransferase-cyclodeaminase (FTCD).